Consider the following 570-residue polypeptide: Eukaryotic translation initiation factor 2A (570 aa).

WD repeat units lie at residues 274–316 (EKKG…FDTI) and 318–358 (GPRN…EIIS). A disordered region spans residues 468 to 526 (PPHLRKPLGGGGSAGPPSAAAPTPGNQNQRPAQPRANGNGNAPQPFRPQQSEQERKAFQ). The span at 482-492 (GPPSAAAPTPG) shows a compositional bias: low complexity. A compositionally biased stretch (polar residues) spans 493–518 (NQNQRPAQPRANGNGNAPQPFRPQQS). A coiled-coil region spans residues 519 to 541 (EQERKAFQLKKKVEEIKVLKQRV).

It belongs to the WD repeat EIF2A family.

Functionally, functions in the early steps of protein synthesis of a small number of specific mRNAs. Acts by directing the binding of methionyl-tRNAi to 40S ribosomal subunits. In contrast to the eIF-2 complex, it binds methionyl-tRNAi to 40S subunits in a codon-dependent manner, whereas the eIF-2 complex binds methionyl-tRNAi to 40S subunits in a GTP-dependent manner. This Caenorhabditis elegans protein is Eukaryotic translation initiation factor 2A.